The following is a 458-amino-acid chain: UPF0210 protein Maeo_1412 (458 aa).

Belongs to the UPF0210 family.

This Methanococcus aeolicus (strain ATCC BAA-1280 / DSM 17508 / OCM 812 / Nankai-3) protein is UPF0210 protein Maeo_1412.